Reading from the N-terminus, the 840-residue chain is Transient receptor potential cation channel subfamily V member 1 (840 aa).

Residues 1-12 (MKNWGSSDSGGS) are compositionally biased toward low complexity. Positions 1–43 (MKNWGSSDSGGSEDPPQEDSCLDPLDGDPNSRPVPAKPHIFPT) are disordered. The Cytoplasmic segment spans residues 1-433 (MKNWGSSDSG…QDKWDRFVKR (433 aa)). 2 ANK repeats span residues 111-139 (KLYD…FLQK) and 154-186 (TGKT…QTDS). ATP is bound by residues R116, K156, K161, N165, 200-203 (YKGQ), and 211-212 (ER). ANK repeat units lie at residues 204–229 (TALH…ADVQ), 250–277 (ELPL…QPAD), 286–322 (NTVL…KLHP), and 336–359 (TPLA…REIQ). At T371 the chain carries Phosphothreonine; by PKA; in vitro. Residues 394–416 (NSVLEVIAYSSSETPNRHDMLLV) form an ANK 7 repeat. A helical membrane pass occupies residues 434–455 (IFYFNFFIYCLYMIIFTTAAYY). The Extracellular portion of the chain corresponds to 456 to 473 (RPVDGLPPYKLKHTVGDY). Residues 474-498 (FRVTGEILSVLGGVYFFFRGIQYFL) form a helical membrane-spanning segment. Topologically, residues 499–511 (QRRPSLKTLFVDS) are cytoplasmic. The residue at position 503 (S503) is a Phosphoserine; by PKC/PRKCE. 512-513 (YS) provides a ligand contact to resiniferatoxin. A helical membrane pass occupies residues 512–533 (YSEMLFFVQSLFMLGTVVLYFC). The Extracellular portion of the chain corresponds to 534–536 (HHK). A helical membrane pass occupies residues 537–557 (EYVASMVFSLAMGWTNMLYYT). Residues T551 and R558 each coordinate resiniferatoxin. The Cytoplasmic portion of the chain corresponds to 558–560 (RGF). A helical transmembrane segment spans residues 561-599 (QQMGIYAVMIEKMILRDLCRFMFVYLVFLFGFSTAVVTL). At 600–631 (IEDGKNNSVPTESTLHRWRGPGCRPPDSSYNS) the chain is on the extracellular side. N605 carries an N-linked (GlcNAc...) asparagine glycan. The pore-forming intramembrane region spans 632 to 653 (LYSTCLELFKFTIGMGDLEFTE). Residue G645 participates in Na(+) binding. A Selectivity filter motif is present at residues 645–648 (GMGD). Residue D648 coordinates Ca(2+). At 654 to 657 (NYDF) the chain is on the extracellular side. A helical transmembrane segment spans residues 658–684 (KAVFIILLLAYVILTYILLLNMLIALM). Topologically, residues 685–840 (GETVNKIAQE…FKDPVGLGEK (156 aa)) are cytoplasmic. The AD stretch occupies residues 686–714 (ETVNKIAQESKNIWKLQRAITILDTEKSF). T706 carries the post-translational modification Phosphothreonine. The segment at 769-803 (EGIKRTLSFSLRSGRVSGRNWKNFSLVPLLRDAST) is interaction with calmodulin. Position 776 is a phosphoserine (S776). The required for PIP2-mediated channel inhibition stretch occupies residues 779 to 794 (LRSGRVSGRNWKNFSL). At S802 the chain carries Phosphoserine; by PKC/PRKCE and PKC/PRKCZ. Phosphoserine is present on S822.

Belongs to the transient receptor (TC 1.A.4) family. TrpV subfamily. TRPV1 sub-subfamily. Homotetramer. Interacts with PIRT. May also form a heteromeric channel with TRPV3. Interacts with CALM, PRKCM and CSK. Interacts with PRKCG and NTRK1, probably by forming a trimeric complex. Interacts with the Scolopendra mutilans RhTx toxin. Interacts with TMEM100. Interacts with PACS2. In terms of processing, phosphorylation by PKA reverses capsaicin-induced dephosphorylation at multiple sites. Phosphorylation by CAMKII seems to regulate binding to vanilloids. Phosphorylated and modulated by PRKCE, PRKCM and probably PRKCZ. Dephosphorylation by calcineurin seems to lead to receptor desensitization and phosphorylation by CAMKII recovers activity.

Its subcellular location is the postsynaptic cell membrane. The protein resides in the cell projection. It localises to the dendritic spine membrane. It is found in the cell membrane. The enzyme catalyses Ca(2+)(in) = Ca(2+)(out). It catalyses the reaction Mg(2+)(in) = Mg(2+)(out). The catalysed reaction is Na(+)(in) = Na(+)(out). It carries out the reaction K(+)(in) = K(+)(out). Channel activity is activated via the interaction with PIRT and phosphatidylinositol 4,5-bisphosphate (PIP2). Both PIRT and PIP2 are required to activate channel activity. The channel is sensitized by ATP binding. Repeated stimulation with capsaicin gives rise to progressively smaller responses, due to desensitization. This desensitization is triggered by the influx of calcium ions and is inhibited by elevated ATP levels. Ca(2+) and CALM displace ATP from its binding site and trigger a conformation change that leads to a closed, desensitized channel. Intracellular PIP2 inhibits desensitization. The double-knot toxin (DkTx) from the Chinese earth tiger tarantula activates the channel and traps it in an open conformation. The Scolopendra mutilans RhTx toxin potentiates the heat activation pathway mediated by this channel by binding to the charge-rich outer pore region (in an activated state). In terms of biological role, non-selective calcium permeant cation channel involved in detection of noxious chemical and thermal stimuli. Seems to mediate proton influx and may be involved in intracellular acidosis in nociceptive neurons. Involved in mediation of inflammatory pain and hyperalgesia. Sensitized by a phosphatidylinositol second messenger system activated by receptor tyrosine kinases, which involves PKC isozymes and PCL. Activated by vanilloids, like capsaicin, and temperatures higher than 42 degrees Celsius. Upon activation, exhibits a time- and Ca(2+)-dependent outward rectification, followed by a long-lasting refractory state. Mild extracellular acidic pH (6.5) potentiates channel activation by noxious heat and vanilloids, whereas acidic conditions (pH &lt;6) directly activate the channel. Can be activated by endogenous compounds, including 12-hydroperoxytetraenoic acid and bradykinin. Acts as ionotropic endocannabinoid receptor with central neuromodulatory effects. Triggers a form of long-term depression (TRPV1-LTD) mediated by the endocannabinoid anandamine in the hippocampus and nucleus accumbens by affecting AMPA receptors endocytosis. The chain is Transient receptor potential cation channel subfamily V member 1 (TRPV1) from Canis lupus familiaris (Dog).